Reading from the N-terminus, the 1135-residue chain is Large proline-rich protein bag6-A (1135 aa).

Residues 7 to 82 form the Ubiquitin-like domain; it reads MEVTVKTLDS…HLVERAPPQT (76 aa). 8 disordered regions span residues 76-114, 194-238, 350-407, 498-522, 552-612, 661-698, 1075-1099, and 1116-1135; these read ERAP…RNGN, EQAA…SPSE, TGNG…PHPR, SFQF…VPGA, QGGS…QHLS, PVST…ESLP, KATG…EAQG, and NESY…RGDP. The segment covering 79–100 has biased composition (low complexity); sequence PPQTQPSTGGPSTSSSTSPTSS. A compositionally biased stretch (polar residues) spans 212 to 227; the sequence is RETLPQTTQNTDGQSN. A compositionally biased stretch (low complexity) spans 228-237; it reads TTPTSHPSPS. Polar residues predominate over residues 367-387; sequence QPPSTNTSEPQRPNTENQPPS. Composition is skewed to low complexity over residues 555 to 600 and 663 to 672; these read SSTS…SVPS and STAPTQSASQ. Over residues 673–692 the composition is skewed to pro residues; the sequence is APPPSSPPPPPAHSSPPPAA. The segment covering 1087–1099 has biased composition (basic and acidic residues); it reads CVRRELDNSEAQG. A compositionally biased stretch (polar residues) spans 1116–1129; sequence NESYSAQRFPNTQR.

As to quaternary structure, component of the bag6/bat3 complex.

The protein localises to the cytoplasm. The protein resides in the cytosol. Its subcellular location is the nucleus. It is found in the secreted. It localises to the extracellular exosome. ATP-independent molecular chaperone preventing the aggregation of misfolded and hydrophobic patches-containing proteins. Functions as part of a cytosolic protein quality control complex, the bag6/bat3 complex, which maintains these client proteins in a soluble state and participates in their proper delivery to the endoplasmic reticulum or alternatively can promote their sorting to the proteasome where they undergo degradation. The bag6/bat3 complex is involved in the post-translational delivery of tail-anchored/type II transmembrane proteins to the endoplasmic reticulum membrane. Similarly, the bag6/bat3 complex also functions as a sorting platform for proteins of the secretory pathway that are mislocalized to the cytosol either delivering them to the proteasome for degradation or to the endoplasmic reticulum. The bag6/bat3 complex also plays a role in the endoplasmic reticulum-associated degradation (ERAD), a quality control mechanism that eliminates unwanted proteins of the endoplasmic reticulum through their retrotranslocation to the cytosol and their targeting to the proteasome. It maintains these retrotranslocated proteins in an unfolded yet soluble state condition in the cytosol to ensure their proper delivery to the proteasome. Also required for selective ubiquitin-mediated degradation of defective nascent chain polypeptides by the proteasome. Also involved in endoplasmic reticulum stress-induced pre-emptive quality control, a mechanism that selectively attenuates the translocation of newly synthesized proteins into the endoplasmic reticulum and reroutes them to the cytosol for proteasomal degradation. May ensure the proper degradation of these proteins and thereby protects the endoplasmic reticulum from protein overload upon stress. By stabilizing a large spectrum of proteins, may indirectly affect different biological processes including apoptosis. By controlling the steady-state expression of the IGF1R receptor, indirectly regulates the insulin-like growth factor receptor signaling pathway. Functionally, when nuclear, may also act as a component of some chromatin regulator complex. This is Large proline-rich protein bag6-A from Xenopus laevis (African clawed frog).